Reading from the N-terminus, the 325-residue chain is Elongation factor P--(R)-beta-lysine ligase (325 aa).

A substrate-binding site is contributed by 76–78; that stretch reads SPE. Residues 100-102 and Asn109 contribute to the ATP site; that span reads RNE. Tyr118 provides a ligand contact to substrate. 244-245 is a binding site for ATP; sequence EL. A substrate-binding site is contributed by Glu251. Residue Gly300 participates in ATP binding.

It belongs to the class-II aminoacyl-tRNA synthetase family. EpmA subfamily. Homodimer.

The catalysed reaction is D-beta-lysine + L-lysyl-[protein] + ATP = N(6)-((3R)-3,6-diaminohexanoyl)-L-lysyl-[protein] + AMP + diphosphate + H(+). With EpmB is involved in the beta-lysylation step of the post-translational modification of translation elongation factor P (EF-P) on 'Lys-34'. Catalyzes the ATP-dependent activation of (R)-beta-lysine produced by EpmB, forming a lysyl-adenylate, from which the beta-lysyl moiety is then transferred to the epsilon-amino group of EF-P 'Lys-34'. The chain is Elongation factor P--(R)-beta-lysine ligase from Salmonella arizonae (strain ATCC BAA-731 / CDC346-86 / RSK2980).